The following is a 302-amino-acid chain: tRNA dimethylallyltransferase (302 aa).

9-16 contributes to the ATP binding site; that stretch reads GPTGSGKT. 11 to 16 is a binding site for substrate; it reads TGSGKT.

The protein belongs to the IPP transferase family. Monomer. It depends on Mg(2+) as a cofactor.

The enzyme catalyses adenosine(37) in tRNA + dimethylallyl diphosphate = N(6)-dimethylallyladenosine(37) in tRNA + diphosphate. Catalyzes the transfer of a dimethylallyl group onto the adenine at position 37 in tRNAs that read codons beginning with uridine, leading to the formation of N6-(dimethylallyl)adenosine (i(6)A). The sequence is that of tRNA dimethylallyltransferase from Thermus thermophilus (strain ATCC BAA-163 / DSM 7039 / HB27).